Here is a 115-residue protein sequence, read N- to C-terminus: Phosphoribosyl-ATP pyrophosphatase (115 aa).

It belongs to the PRA-PH family.

It localises to the cytoplasm. It catalyses the reaction 1-(5-phospho-beta-D-ribosyl)-ATP + H2O = 1-(5-phospho-beta-D-ribosyl)-5'-AMP + diphosphate + H(+). It functions in the pathway amino-acid biosynthesis; L-histidine biosynthesis; L-histidine from 5-phospho-alpha-D-ribose 1-diphosphate: step 2/9. The sequence is that of Phosphoribosyl-ATP pyrophosphatase from Bordetella bronchiseptica (strain ATCC BAA-588 / NCTC 13252 / RB50) (Alcaligenes bronchisepticus).